Here is a 518-residue protein sequence, read N- to C-terminus: Two-component response regulator-like PRR1 (518 aa).

A Response regulatory domain is found at 29–147 (RILLCDSDPS…ELLNLWTHVW (119 aa)). 3 disordered regions span residues 172–241 (PSDA…PGVM), 266–305 (TPTTSSFDSELQKGGNRLDSSDHRGNFSSTTDRSDTGTDV), and 483–518 (VRQANYTDITSTGDDISEDEDDDPSSREVEMVSSPE). Residues 196-212 (NQETSTSNQHEYESNPS) show a composition bias toward polar residues. The region spanning 443–485 (RAAALAKFRLKRKERCFDKKVRYVNRKKLAETRPRVRGQFVRQ) is the CCT domain.

Belongs to the ARR-like family. As to quaternary structure, interacts with PIL13. Interacts with PIL15.

It is found in the nucleus. Its function is as follows. Controls photoperiodic flowering response. Seems to be one of the component of the circadian clock. Expression of several members of the ARR-like family is controlled by circadian rhythm. The particular coordinated sequential expression of PRR73, PRR37, PRR95, PRR59 and PPR1 result to circadian waves that may be at the basis of the endogenous circadian clock. This Oryza sativa subsp. japonica (Rice) protein is Two-component response regulator-like PRR1 (PRR1).